Reading from the N-terminus, the 393-residue chain is 4-hydroxyphenylpyruvate dioxygenase (393 aa).

An N-acetylthreonine modification is found at Thr2. 2 VOC domains span residues 18-152 (HFHS…KMTF) and 180-338 (IIDH…IFTK). Fe cation is bound at residue His183. Phosphoserine occurs at positions 211, 226, and 250. His266 and Glu349 together coordinate Fe cation.

The protein belongs to the 4HPPD family. As to quaternary structure, homodimer. Fe cation serves as cofactor. As to expression, liver.

Its subcellular location is the cytoplasm. It localises to the endoplasmic reticulum membrane. The protein localises to the golgi apparatus membrane. The catalysed reaction is 3-(4-hydroxyphenyl)pyruvate + O2 = homogentisate + CO2. It functions in the pathway amino-acid degradation; L-phenylalanine degradation; acetoacetate and fumarate from L-phenylalanine: step 3/6. In terms of biological role, catalyzes the conversion of 4-hydroxyphenylpyruvic acid to homogentisic acid, one of the steps in tyrosine catabolism. This is 4-hydroxyphenylpyruvate dioxygenase (HPD) from Sus scrofa (Pig).